The primary structure comprises 717 residues: Ribosomal RNA large subunit methyltransferase K/L (717 aa).

The 98-residue stretch at 45 to 142 folds into the THUMP domain; the sequence is GAYRICLGSR…DKRSGVQTVQ (98 aa).

The protein belongs to the methyltransferase superfamily. RlmKL family.

It localises to the cytoplasm. The enzyme catalyses guanosine(2445) in 23S rRNA + S-adenosyl-L-methionine = N(2)-methylguanosine(2445) in 23S rRNA + S-adenosyl-L-homocysteine + H(+). It carries out the reaction guanosine(2069) in 23S rRNA + S-adenosyl-L-methionine = N(2)-methylguanosine(2069) in 23S rRNA + S-adenosyl-L-homocysteine + H(+). In terms of biological role, specifically methylates the guanine in position 2445 (m2G2445) and the guanine in position 2069 (m7G2069) of 23S rRNA. This is Ribosomal RNA large subunit methyltransferase K/L from Hahella chejuensis (strain KCTC 2396).